Here is a 273-residue protein sequence, read N- to C-terminus: Ribosomal RNA small subunit methyltransferase A (273 aa).

Residues N17, L19, G44, E65, and N111 each contribute to the S-adenosyl-L-methionine site.

The protein belongs to the class I-like SAM-binding methyltransferase superfamily. rRNA adenine N(6)-methyltransferase family. RsmA subfamily.

It localises to the cytoplasm. The catalysed reaction is adenosine(1518)/adenosine(1519) in 16S rRNA + 4 S-adenosyl-L-methionine = N(6)-dimethyladenosine(1518)/N(6)-dimethyladenosine(1519) in 16S rRNA + 4 S-adenosyl-L-homocysteine + 4 H(+). In terms of biological role, specifically dimethylates two adjacent adenosines (A1518 and A1519) in the loop of a conserved hairpin near the 3'-end of 16S rRNA in the 30S particle. May play a critical role in biogenesis of 30S subunits. The polypeptide is Ribosomal RNA small subunit methyltransferase A (Buchnera aphidicola subsp. Acyrthosiphon pisum (strain APS) (Acyrthosiphon pisum symbiotic bacterium)).